We begin with the raw amino-acid sequence, 428 residues long: Type II methyltransferase M.BanI (428 aa).

Positions 3–417 constitute an SAM-dependent MTase C5-type domain; it reads IKFVDLFAGI…EDLFQNNVNE (415 aa). Cys76 is a catalytic residue.

It belongs to the class I-like SAM-binding methyltransferase superfamily. C5-methyltransferase family. In terms of assembly, monomer.

The enzyme catalyses a 2'-deoxycytidine in DNA + S-adenosyl-L-methionine = a 5-methyl-2'-deoxycytidine in DNA + S-adenosyl-L-homocysteine + H(+). In terms of biological role, a methylase, recognizes the double-stranded sequence 5'-GGYRCC-3', methylates C-4 on both strands, and protects the DNA from cleavage by the BanI endonuclease. The protein is Type II methyltransferase M.BanI (banIM) of Aneurinibacillus aneurinilyticus (Bacillus aneurinolyticus).